The following is a 573-amino-acid chain: 2-succinyl-5-enolpyruvyl-6-hydroxy-3-cyclohexene-1-carboxylate synthase (573 aa).

Belongs to the TPP enzyme family. MenD subfamily. Homodimer. Mg(2+) serves as cofactor. Requires Mn(2+) as cofactor. It depends on thiamine diphosphate as a cofactor.

It catalyses the reaction isochorismate + 2-oxoglutarate + H(+) = 5-enolpyruvoyl-6-hydroxy-2-succinyl-cyclohex-3-ene-1-carboxylate + CO2. It functions in the pathway quinol/quinone metabolism; 1,4-dihydroxy-2-naphthoate biosynthesis; 1,4-dihydroxy-2-naphthoate from chorismate: step 2/7. Its pathway is quinol/quinone metabolism; menaquinone biosynthesis. In terms of biological role, catalyzes the thiamine diphosphate-dependent decarboxylation of 2-oxoglutarate and the subsequent addition of the resulting succinic semialdehyde-thiamine pyrophosphate anion to isochorismate to yield 2-succinyl-5-enolpyruvyl-6-hydroxy-3-cyclohexene-1-carboxylate (SEPHCHC). This Shewanella sp. (strain MR-4) protein is 2-succinyl-5-enolpyruvyl-6-hydroxy-3-cyclohexene-1-carboxylate synthase.